Here is a 237-residue protein sequence, read N- to C-terminus: Phosphoribosylaminoimidazole-succinocarboxamide synthase (237 aa).

It belongs to the SAICAR synthetase family.

The catalysed reaction is 5-amino-1-(5-phospho-D-ribosyl)imidazole-4-carboxylate + L-aspartate + ATP = (2S)-2-[5-amino-1-(5-phospho-beta-D-ribosyl)imidazole-4-carboxamido]succinate + ADP + phosphate + 2 H(+). It functions in the pathway purine metabolism; IMP biosynthesis via de novo pathway; 5-amino-1-(5-phospho-D-ribosyl)imidazole-4-carboxamide from 5-amino-1-(5-phospho-D-ribosyl)imidazole-4-carboxylate: step 1/2. The sequence is that of Phosphoribosylaminoimidazole-succinocarboxamide synthase from Pseudomonas fluorescens (strain Pf0-1).